Reading from the N-terminus, the 390-residue chain is Heme chaperone HemW (390 aa).

Residues 15–254 (PMPGQPFGVY…DARLSAAGFA (240 aa)) form the Radical SAM core domain. Y24 is a binding site for S-adenosyl-L-methionine. The [4Fe-4S] cluster site is built by C30, C34, and C37. Residues G82, 83–84 (GT), E115, Q142, R154, and D179 each bind S-adenosyl-L-methionine.

It belongs to the anaerobic coproporphyrinogen-III oxidase family. HemW subfamily. It depends on [4Fe-4S] cluster as a cofactor.

Its subcellular location is the cytoplasm. Probably acts as a heme chaperone, transferring heme to an unknown acceptor. Binds one molecule of heme per monomer, possibly covalently. Binds 1 [4Fe-4S] cluster. The cluster is coordinated with 3 cysteines and an exchangeable S-adenosyl-L-methionine. This chain is Heme chaperone HemW, found in Mycobacterium tuberculosis (strain CDC 1551 / Oshkosh).